The primary structure comprises 210 residues: Thymidylate kinase (210 aa).

An ATP-binding site is contributed by 16-23 (GGDGVGKS).

This sequence belongs to the thymidylate kinase family.

It carries out the reaction dTMP + ATP = dTDP + ADP. Its function is as follows. Phosphorylation of dTMP to form dTDP in both de novo and salvage pathways of dTTP synthesis. This chain is Thymidylate kinase, found in Leifsonia xyli subsp. xyli (strain CTCB07).